The chain runs to 559 residues: Asparagine--tRNA ligase, cytoplasmic (559 aa).

At Ser72 the chain carries Phosphoserine. N6-acetyllysine occurs at positions 255 and 501.

Belongs to the class-II aminoacyl-tRNA synthetase family.

It localises to the cytoplasm. The catalysed reaction is tRNA(Asn) + L-asparagine + ATP = L-asparaginyl-tRNA(Asn) + AMP + diphosphate + H(+). In Bos taurus (Bovine), this protein is Asparagine--tRNA ligase, cytoplasmic (NARS).